A 205-amino-acid polypeptide reads, in one-letter code: Small ribosomal subunit protein uS4c (205 aa).

An S4 RNA-binding domain is found at 93–156; that stretch reads MRLDNTVFRL…KSRNLVLNNL (64 aa).

The protein belongs to the universal ribosomal protein uS4 family. Part of the 30S ribosomal subunit. Contacts protein S5. The interaction surface between S4 and S5 is involved in control of translational fidelity.

Its subcellular location is the plastid. It is found in the chloroplast. Its function is as follows. One of the primary rRNA binding proteins, it binds directly to 16S rRNA where it nucleates assembly of the body of the 30S subunit. With S5 and S12 plays an important role in translational accuracy. In Mesostigma viride (Green alga), this protein is Small ribosomal subunit protein uS4c (rps4).